The following is a 262-amino-acid chain: Diphthine synthase (262 aa).

Residues Leu-10, Asp-87, Val-90, 115-116 (SI), Leu-166, Ala-209, and His-234 each bind S-adenosyl-L-methionine.

This sequence belongs to the diphthine synthase family. Homodimer.

The catalysed reaction is 2-[(3S)-amino-3-carboxypropyl]-L-histidyl-[translation elongation factor 2] + 3 S-adenosyl-L-methionine = diphthine-[translation elongation factor 2] + 3 S-adenosyl-L-homocysteine + 3 H(+). Its pathway is protein modification; peptidyl-diphthamide biosynthesis. Functionally, S-adenosyl-L-methionine-dependent methyltransferase that catalyzes the trimethylation of the amino group of the modified target histidine residue in translation elongation factor 2 (EF-2), to form an intermediate called diphthine. The three successive methylation reactions represent the second step of diphthamide biosynthesis. In Pyrococcus abyssi (strain GE5 / Orsay), this protein is Diphthine synthase.